Consider the following 193-residue polypeptide: ATP-dependent Clp protease proteolytic subunit 2 (193 aa).

Catalysis depends on Ser98, which acts as the Nucleophile. His123 is a catalytic residue.

It belongs to the peptidase S14 family. As to quaternary structure, fourteen ClpP subunits assemble into 2 heptameric rings which stack back to back to give a disk-like structure with a central cavity, resembling the structure of eukaryotic proteasomes.

The protein localises to the cytoplasm. The enzyme catalyses Hydrolysis of proteins to small peptides in the presence of ATP and magnesium. alpha-casein is the usual test substrate. In the absence of ATP, only oligopeptides shorter than five residues are hydrolyzed (such as succinyl-Leu-Tyr-|-NHMec, and Leu-Tyr-Leu-|-Tyr-Trp, in which cleavage of the -Tyr-|-Leu- and -Tyr-|-Trp bonds also occurs).. Its function is as follows. Cleaves peptides in various proteins in a process that requires ATP hydrolysis. Has a chymotrypsin-like activity. Plays a major role in the degradation of misfolded proteins. The chain is ATP-dependent Clp protease proteolytic subunit 2 from Bacillus cereus (strain ATCC 14579 / DSM 31 / CCUG 7414 / JCM 2152 / NBRC 15305 / NCIMB 9373 / NCTC 2599 / NRRL B-3711).